We begin with the raw amino-acid sequence, 352 residues long: C-X-C chemokine receptor type 4 (352 aa).

Positions 1-21 (MEGISIYTSDNYTEEMGSGDY) are important for chemokine binding and signaling. Over 1-38 (MEGISIYTSDNYTEEMGSGDYDSMKEPCFREENANFNK) the chain is Extracellular. Tyrosine 7 is subject to Sulfotyrosine. Asparagine 11 carries N-linked (GlcNAc...) asparagine glycosylation. Position 12 is a sulfotyrosine (tyrosine 12). Serine 18 carries an O-linked (Xyl...) (chondroitin sulfate) serine glycan. A Sulfotyrosine modification is found at tyrosine 21. Cystine bridges form between cysteine 28–cysteine 274 and cysteine 109–cysteine 186. A helical transmembrane segment spans residues 39–63 (IFLPTIYSIIFLTGIVGNGLVILVM). The Cytoplasmic segment spans residues 64–77 (GYQKKLRSMTDKYR). A helical membrane pass occupies residues 78–99 (LHLSVADLLFVITLPFWAVDAV). The tract at residues 94 to 97 (WAVD) is chemokine binding. Residues 100–110 (ANWYFGNFLCK) are Extracellular-facing. Residues 111 to 130 (AVHVIYTVNLYSSVLILAFI) form a helical membrane-spanning segment. A chemokine binding region spans residues 113 to 117 (HVIYT). The Cytoplasmic segment spans residues 131-154 (SLDRYLAIVHATNSQRPRKLLAEK). The Important for signaling signature appears at 133-135 (DRY). An involved in dimerization; when bound to chemokine region spans residues 135–147 (YLAIVHATNSQRP). Residues 155–174 (VVYVGVWIPALLLTIPDFIF) traverse the membrane as a helical segment. Residues 175–195 (ANVSEADDRYICDRFYPNDLW) lie on the Extracellular side of the membrane. The tract at residues 186–190 (CDRFY) is chemokine binding, important for signaling. Residues 191-210 (PNDLWVVVFQFQHIMVGLIL) are involved in dimerization. The helical transmembrane segment at 196–216 (VVVFQFQHIMVGLILPGIVIL) threads the bilayer. Residues 217–241 (SCYCIIISKLSHSKGHQKRKALKTT) lie on the Cytoplasmic side of the membrane. Residues 242-261 (VILILAFFACWLPYYIGISI) traverse the membrane as a helical segment. The Extracellular portion of the chain corresponds to 262-282 (DSFILLEIIKQGCEFENTVHK). Positions 266-268 (LLE) are involved in dimerization. Residues 283 to 302 (WISITEALAFFHCCLNPILY) traverse the membrane as a helical segment. The Cytoplasmic segment spans residues 303-352 (AFLGAKFKTSAQHALTSVSRGSSLKILSKGKRGGHSSVSTESESSSFHSS). Residues serine 319 and serine 321 each carry the phosphoserine modification. Phosphoserine; by PKC and GRK6 occurs at positions 324 and 325. A disordered region spans residues 329–352 (LSKGKRGGHSSVSTESESSSFHSS). A Phosphoserine; by GRK6 modification is found at serine 330. Residue lysine 331 forms a Glycyl lysine isopeptide (Lys-Gly) (interchain with G-Cter in ubiquitin) linkage. Over residues 337–352 (HSSVSTESESSSFHSS) the composition is skewed to low complexity. Serine 339 carries the phosphoserine; by GRK6 modification. Residues serine 348 and serine 351 each carry the phosphoserine modification.

The protein belongs to the G-protein coupled receptor 1 family. As to quaternary structure, monomer. Can form homodimers. Interacts with CD164. Interacts with ARRB2; the interaction is dependent on the C-terminal phosphorylation of CXCR4 and allows activation of MAPK1 and MAPK3. Interacts with ARR3; the interaction is dependent on the C-terminal phosphorylation of CXCR4 and modulates calcium mobilization. Interacts with RNF113A; the interaction, enhanced by CXCL12, promotes CXCR4 ubiquitination and subsequent degradation. Interacts (via the cytoplasmic C-terminal) with ITCH (via the WW domains I and II); the interaction, enhanced by CXCL12, promotes CXCR4 ubiquitination and leads to its degradation. Interacts with extracellular ubiquitin. Interacts with DBN1; this interaction is enhanced by antigenic stimulation. Following LPS binding, may form a complex with GDF5, HSP90AA1 and HSPA8. Phosphorylated on agonist stimulation. Rapidly phosphorylated on serine and threonine residues in the C-terminal. Phosphorylation at Ser-324 and Ser-325 leads to recruitment of ITCH, ubiquitination and protein degradation. Post-translationally, ubiquitinated after ligand binding, leading to its degradation. Ubiquitinated by ITCH at the cell membrane on agonist stimulation. The ubiquitin-dependent mechanism, endosomal sorting complex required for transport (ESCRT), then targets CXCR4 for lysosomal degradation. This process is dependent also on prior Ser-/Thr-phosphorylation in the C-terminal of CXCR4. Also binding of ARRB1 to STAM negatively regulates CXCR4 sorting to lysosomes though modulating ubiquitination of SFR5S. In terms of processing, sulfation is required for efficient binding of CXCL12/SDF-1alpha and promotes its dimerization. O- and N-glycosylated. N-glycosylation can mask coreceptor function. The O-glycosylation chondroitin sulfate attachment does not affect interaction with CXCL12/SDF-1alpha nor its coreceptor activity.

The protein resides in the cell membrane. Its subcellular location is the cell junction. The protein localises to the early endosome. It localises to the late endosome. It is found in the lysosome. Functionally, receptor for the C-X-C chemokine CXCL12/SDF-1 that transduces a signal by increasing intracellular calcium ion levels and enhancing MAPK1/MAPK3 activation. Involved in the AKT signaling cascade. Plays a role in regulation of cell migration, e.g. during wound healing. Acts as a receptor for extracellular ubiquitin; leading to enhanced intracellular calcium ions and reduced cellular cAMP levels. Binds bacterial lipopolysaccharide (LPS) et mediates LPS-induced inflammatory response, including TNF secretion by monocytes. Involved in hematopoiesis and in cardiac ventricular septum formation. Also plays an essential role in vascularization of the gastrointestinal tract, probably by regulating vascular branching and/or remodeling processes in endothelial cells. Involved in cerebellar development. In the CNS, could mediate hippocampal-neuron survival. The protein is C-X-C chemokine receptor type 4 (CXCR4) of Pan troglodytes (Chimpanzee).